Consider the following 137-residue polypeptide: Peptide methionine sulfoxide reductase MsrB (137 aa).

Residues 7–129 (PTENIEKLSD…NSASLNFVDD (123 aa)) form the MsrB domain. The Zn(2+) site is built by Cys46, Cys49, Cys95, and Cys98. The active-site Nucleophile is the Cys118.

It belongs to the MsrB Met sulfoxide reductase family. Zn(2+) is required as a cofactor.

The enzyme catalyses L-methionyl-[protein] + [thioredoxin]-disulfide + H2O = L-methionyl-(R)-S-oxide-[protein] + [thioredoxin]-dithiol. This chain is Peptide methionine sulfoxide reductase MsrB, found in Yersinia pseudotuberculosis serotype O:1b (strain IP 31758).